We begin with the raw amino-acid sequence, 254 residues long: Insulin-like growth factor-binding protein 4 (254 aa).

Residues 1-21 form the signal peptide; the sequence is MLPFGLVAALLLAAGPRPSLG. The 81-residue stretch at 23 to 103 folds into the IGFBP N-terminal domain; sequence EAIHCPPCSE…MHGQGVCTEL (81 aa). Intrachain disulfides connect cysteine 27-cysteine 53, cysteine 30-cysteine 55, cysteine 38-cysteine 56, cysteine 44-cysteine 59, cysteine 67-cysteine 80, and cysteine 74-cysteine 100. Asparagine 125 carries N-linked (GlcNAc...) asparagine glycosylation. Cystine bridges form between cysteine 131–cysteine 138, cysteine 170–cysteine 200, cysteine 211–cysteine 222, and cysteine 224–cysteine 245. Positions 167 to 245 constitute a Thyroglobulin type-1 domain; sequence QGSCQSELHR…GLEPKGELDC (79 aa). Phosphoserine is present on serine 251.

Binds IGF2 more than IGF1.

It localises to the secreted. IGF-binding proteins prolong the half-life of the IGFs and have been shown to either inhibit or stimulate the growth promoting effects of the IGFs on cell culture. They alter the interaction of IGFs with their cell surface receptors. In Mus musculus (Mouse), this protein is Insulin-like growth factor-binding protein 4 (Igfbp4).